The following is a 405-amino-acid chain: Glucose-1-phosphate adenylyltransferase (405 aa).

Residues tyrosine 96, glycine 161, 176-177 (EK), and serine 194 contribute to the alpha-D-glucose 1-phosphate site.

Belongs to the bacterial/plant glucose-1-phosphate adenylyltransferase family. In terms of assembly, homotetramer.

The catalysed reaction is alpha-D-glucose 1-phosphate + ATP + H(+) = ADP-alpha-D-glucose + diphosphate. The protein operates within glycan biosynthesis; glycogen biosynthesis. Its function is as follows. Involved in the biosynthesis of ADP-glucose, a building block required for the elongation reactions to produce glycogen. Catalyzes the reaction between ATP and alpha-D-glucose 1-phosphate (G1P) to produce pyrophosphate and ADP-Glc. This is Glucose-1-phosphate adenylyltransferase from Aliivibrio fischeri (strain MJ11) (Vibrio fischeri).